The sequence spans 141 residues: uncharacterized protein (141 aa).

It localises to the mitochondrion. This is an uncharacterized protein from Arabidopsis thaliana (Mouse-ear cress).